A 237-amino-acid polypeptide reads, in one-letter code: Segregation and condensation protein A (237 aa).

Belongs to the ScpA family. In terms of assembly, component of a cohesin-like complex composed of ScpA, ScpB and the Smc homodimer, in which ScpA and ScpB bind to the head domain of Smc. The presence of the three proteins is required for the association of the complex with DNA.

Its subcellular location is the cytoplasm. In terms of biological role, participates in chromosomal partition during cell division. May act via the formation of a condensin-like complex containing Smc and ScpB that pull DNA away from mid-cell into both cell halves. The protein is Segregation and condensation protein A of Streptococcus thermophilus (strain CNRZ 1066).